The primary structure comprises 756 residues: U3 small nucleolar RNA-associated protein 14 homolog B (756 aa).

The tract at residues 21–44 (DLPENYPLSTSEDEGDSDGEGKRQ) is disordered. 3 positions are modified to phosphoserine: Ser29, Ser31, and Ser37. Coiled-coil stretches lie at residues 215-244 (SLEE…RREK) and 316-345 (PEAR…SEEE). Basic and acidic residues-rich tracts occupy residues 419–428 (KERSFQERVD) and 452–468 (LNKE…SSEE). Disordered regions lie at residues 419 to 468 (KERS…SSEE) and 497 to 539 (QQGE…KKKK). Residues 449 to 476 (LQKLNKESHQSDNQKVSSEENVLHIQRE) are a coiled coil. Ser554 carries the post-translational modification Phosphoserine.

This sequence belongs to the UTP14 family. As to expression, expressed predominantly in germ cells of the testis; weakly expressed in brain.

Its subcellular location is the nucleus. The protein resides in the nucleolus. Essential for spermatogenesis. May be required specifically for ribosome biogenesis and hence protein synthesis during male meiosis. In Mus musculus (Mouse), this protein is U3 small nucleolar RNA-associated protein 14 homolog B (Utp14b).